A 364-amino-acid chain; its full sequence is Methylthioribose-1-phosphate isomerase (364 aa).

Residues R51–A53, R88, and Q199 contribute to the substrate site. The active-site Proton donor is D240. Residue N250–K251 participates in substrate binding.

Belongs to the eIF-2B alpha/beta/delta subunits family. MtnA subfamily.

It catalyses the reaction 5-(methylsulfanyl)-alpha-D-ribose 1-phosphate = 5-(methylsulfanyl)-D-ribulose 1-phosphate. It participates in amino-acid biosynthesis; L-methionine biosynthesis via salvage pathway; L-methionine from S-methyl-5-thio-alpha-D-ribose 1-phosphate: step 1/6. Catalyzes the interconversion of methylthioribose-1-phosphate (MTR-1-P) into methylthioribulose-1-phosphate (MTRu-1-P). The sequence is that of Methylthioribose-1-phosphate isomerase from Cereibacter sphaeroides (strain KD131 / KCTC 12085) (Rhodobacter sphaeroides).